Reading from the N-terminus, the 28-residue chain is Small spore coat assembly protein A (28 aa).

The chain crosses the membrane as a helical span at residues 8–28 (GFALLVVLFILLIIVGAAYIY).

Belongs to the SscA family.

The protein localises to the spore coat. The protein resides in the membrane. In terms of biological role, spore protein involved in the assembly of several components of the spore coat, including CotB, CotG and CotH, and in spore germination. This is Small spore coat assembly protein A from Bacillus subtilis (strain 168).